Reading from the N-terminus, the 179-residue chain is ADP-ribosylation factor-like protein 5A (179 aa).

A lipid anchor (N-myristoyl glycine) is attached at glycine 2. Residues 23-30 (GLDNAGKT), 66-70 (DIGGQ), 125-128 (NKQD), and alanine 159 each bind GTP.

It belongs to the small GTPase superfamily. Arf family.

Its function is as follows. Lacks ADP-ribosylation enhancing activity. The chain is ADP-ribosylation factor-like protein 5A (ARL5A) from Homo sapiens (Human).